The sequence spans 361 residues: Peptide chain release factor 1 (361 aa).

Q237 is subject to N5-methylglutamine. The segment covering 287–297 has biased composition (basic and acidic residues); it reads KQQKEQSDTRK. A disordered region spans residues 287 to 313; the sequence is KQQKEQSDTRKSLVGSGDRSERIRTYN.

It belongs to the prokaryotic/mitochondrial release factor family. In terms of processing, methylated by PrmC. Methylation increases the termination efficiency of RF1.

The protein localises to the cytoplasm. Functionally, peptide chain release factor 1 directs the termination of translation in response to the peptide chain termination codons UAG and UAA. This Francisella tularensis subsp. holarctica (strain FTNF002-00 / FTA) protein is Peptide chain release factor 1.